The primary structure comprises 83 residues: High-potential iron-sulfur protein (83 aa).

[4Fe-4S] cluster contacts are provided by C43, C46, C61, and C75.

It belongs to the high-potential iron-sulfur protein (HiPIP) family. Homodimer.

Specific class of high-redox-potential 4Fe-4S ferredoxins. Functions in anaerobic electron transport in most purple and in some other photosynthetic bacteria and in at least one genus (Paracoccus) of halophilic, denitrifying bacteria. This chain is High-potential iron-sulfur protein (hip), found in Thermochromatium tepidum (Chromatium tepidum).